A 306-amino-acid polypeptide reads, in one-letter code: Leucotoxin LukEv (306 aa).

A signal peptide spans methionine 1–alanine 23.

Belongs to the aerolysin family. Toxicity requires sequential binding and synergistic association of a class S and a class F component which form heterooligomeric complexes. LukEv (class S) associates with LukDv (class F).

The protein resides in the secreted. Its function is as follows. Part of a bi-component leucotoxin that acts by forming pores in the membrane of the target cells. The activity of LukEv-LukDv to rabbit leukocytes is similar to that of the Panton-Valentine leucocidin (PVL). LukEv-LukDv is hemolytic to rabbit red blood cells although the activity is only 8% of gamma-hemolysin. This chain is Leucotoxin LukEv (lukEv), found in Staphylococcus aureus (strain NCTC 8325 / PS 47).